The sequence spans 562 residues: Nucleoprotein (562 aa).

The segment at 53–238 (MRRERRDDND…ITQEESQINI (186 aa)) is binding site for the cap structure m7GTP. Residues aspartate 381 and glutamate 383 each contribute to the Mn(2+) site. Zn(2+) is bound by residues glutamate 391, cysteine 498, histidine 501, and cysteine 522. Aspartate 526 serves as a coordination point for Mn(2+).

The protein belongs to the arenaviridae nucleocapsid protein family. Homomultimerizes to form the nucleocapsid. Binds to viral genomic RNA. Interacts with glycoprotein G2. Interacts with protein Z; this interaction probably directs the encapsidated genome to budding sites. Interacts with protein L; this interaction does not interfere with Z-L interaction. Interacts with host IKBKE (via Protein kinase domain); the interaction inhibits IKBKE kinase activity.

It localises to the virion. The protein resides in the host cytoplasm. Functionally, encapsidates the genome, protecting it from nucleases. The encapsidated genomic RNA is termed the nucleocapsid (NC). Serves as template for viral transcription and replication. The increased presence of protein N in host cell does not seem to trigger the switch from transcription to replication as observed in other negative strain RNA viruses. Through the interaction with host IKBKE, strongly inhibits the phosphorylation and nuclear translocation of host IRF3, a protein involved in interferon activation pathway, leading to the inhibition of interferon-beta and IRF3-dependent promoters activation. Also encodes a functional 3'-5' exoribonuclease that degrades preferentially dsRNA substrates and thereby participates in the suppression of interferon induction. The sequence is that of Nucleoprotein from Tamiami mammarenavirus (isolate Rat/United States/W 10777/1964) (TAMV).